Reading from the N-terminus, the 70-residue chain is Protein SlyX homolog (70 aa).

This sequence belongs to the SlyX family.

The chain is Protein SlyX homolog from Shewanella sp. (strain MR-4).